Here is a 119-residue protein sequence, read N- to C-terminus: Large ribosomal subunit protein bL20 (119 aa).

It belongs to the bacterial ribosomal protein bL20 family.

Functionally, binds directly to 23S ribosomal RNA and is necessary for the in vitro assembly process of the 50S ribosomal subunit. It is not involved in the protein synthesizing functions of that subunit. The protein is Large ribosomal subunit protein bL20 of Chloroflexus aurantiacus (strain ATCC 29366 / DSM 635 / J-10-fl).